We begin with the raw amino-acid sequence, 880 residues long: Alanine--tRNA ligase (880 aa).

Residues His548, His552, Cys651, and His655 each contribute to the Zn(2+) site.

The protein belongs to the class-II aminoacyl-tRNA synthetase family. It depends on Zn(2+) as a cofactor.

The protein localises to the cytoplasm. It carries out the reaction tRNA(Ala) + L-alanine + ATP = L-alanyl-tRNA(Ala) + AMP + diphosphate. Functionally, catalyzes the attachment of alanine to tRNA(Ala) in a two-step reaction: alanine is first activated by ATP to form Ala-AMP and then transferred to the acceptor end of tRNA(Ala). Also edits incorrectly charged Ser-tRNA(Ala) and Gly-tRNA(Ala) via its editing domain. This Tropheryma whipplei (strain TW08/27) (Whipple's bacillus) protein is Alanine--tRNA ligase.